We begin with the raw amino-acid sequence, 159 residues long: ATP synthase subunit b 1 (159 aa).

A helical transmembrane segment spans residues 5-25; the sequence is FWAFIGLILFLALLFYFKVPA.

Belongs to the ATPase B chain family. F-type ATPases have 2 components, F(1) - the catalytic core - and F(0) - the membrane proton channel. F(1) has five subunits: alpha(3), beta(3), gamma(1), delta(1), epsilon(1). F(0) has three main subunits: a(1), b(2) and c(10-14). The alpha and beta chains form an alternating ring which encloses part of the gamma chain. F(1) is attached to F(0) by a central stalk formed by the gamma and epsilon chains, while a peripheral stalk is formed by the delta and b chains.

It is found in the cell inner membrane. F(1)F(0) ATP synthase produces ATP from ADP in the presence of a proton or sodium gradient. F-type ATPases consist of two structural domains, F(1) containing the extramembraneous catalytic core and F(0) containing the membrane proton channel, linked together by a central stalk and a peripheral stalk. During catalysis, ATP synthesis in the catalytic domain of F(1) is coupled via a rotary mechanism of the central stalk subunits to proton translocation. Its function is as follows. Component of the F(0) channel, it forms part of the peripheral stalk, linking F(1) to F(0). The sequence is that of ATP synthase subunit b 1 from Bartonella bacilliformis (strain ATCC 35685 / KC583 / Herrer 020/F12,63).